Here is a 277-residue protein sequence, read N- to C-terminus: MNKSAQQKSAHVTTRRLLDMKHNGEKISMLTAYDYTMARILDRAGLDVLLVGDSASNVFAGHSTTLPITIEEMVYHAKAVVRGVHDESGRAMVVVDMPFMSYQISGDEALRNAGKIMKEHGCDALKLEGGKIIADTVKRITDVGIPVMGHLGLMPQSIYKYGSYKVRAKEGVEAEQLLEDAKIIEEAGAFAIVLEKIPSVLAAEVTRSLTIPTIGIGAGVACDGQVLVINDILGLNREFHPRFVRQYADLNTVIEHAAKQYVEDVRQSNFPSPDESY.

Positions 53 and 96 each coordinate Mg(2+). 3-methyl-2-oxobutanoate is bound by residues 53-54 (DS), Asp96, and Lys126. Glu128 contributes to the Mg(2+) binding site. Residue Glu195 is the Proton acceptor of the active site.

It belongs to the PanB family. As to quaternary structure, homodecamer; pentamer of dimers. Requires Mg(2+) as cofactor.

It localises to the cytoplasm. The catalysed reaction is 3-methyl-2-oxobutanoate + (6R)-5,10-methylene-5,6,7,8-tetrahydrofolate + H2O = 2-dehydropantoate + (6S)-5,6,7,8-tetrahydrofolate. Its pathway is cofactor biosynthesis; (R)-pantothenate biosynthesis; (R)-pantoate from 3-methyl-2-oxobutanoate: step 1/2. In terms of biological role, catalyzes the reversible reaction in which hydroxymethyl group from 5,10-methylenetetrahydrofolate is transferred onto alpha-ketoisovalerate to form ketopantoate. The chain is 3-methyl-2-oxobutanoate hydroxymethyltransferase from Pelodictyon phaeoclathratiforme (strain DSM 5477 / BU-1).